A 120-amino-acid chain; its full sequence is MRKSYRVKKEQDFQTVFDASQSVANRNFVVYRLDKPGQKHFRVGLSVGKKVGNAVMRNQVKRYIRQSITELKPDLLQPVDFLVIARRGANQLTMAETKQNLIHVFKLAKLLKEEADSASE.

It belongs to the RnpA family. Consists of a catalytic RNA component (M1 or rnpB) and a protein subunit.

It carries out the reaction Endonucleolytic cleavage of RNA, removing 5'-extranucleotides from tRNA precursor.. RNaseP catalyzes the removal of the 5'-leader sequence from pre-tRNA to produce the mature 5'-terminus. It can also cleave other RNA substrates such as 4.5S RNA. The protein component plays an auxiliary but essential role in vivo by binding to the 5'-leader sequence and broadening the substrate specificity of the ribozyme. In Latilactobacillus sakei subsp. sakei (strain 23K) (Lactobacillus sakei subsp. sakei), this protein is Ribonuclease P protein component.